A 474-amino-acid polypeptide reads, in one-letter code: Selection and upkeep of intraepithelial T-cells protein 4 (474 aa).

The N-terminal stretch at 1-25 is a signal peptide; that stretch reads MGATEVLTSYCVVLCLLQMVALSSG. Over 26 to 241 the chain is Extracellular; it reads HFTVIGSQRP…VLSGELFSWK (216 aa). An Ig-like V-type domain is found at 27–140; sequence FTVIGSQRPI…EEHITEVKVT (114 aa). Disulfide bonds link C48/C122 and C162/C216. 2 N-linked (GlcNAc...) asparagine glycosylation sites follow: N111 and N199. An Ig-like C1-type domain is found at 141–234; the sequence is ATSSDIQILM…QEQSINIVLS (94 aa). Residues 242 to 262 traverse the membrane as a helical segment; it reads IVWIMILSTISFVMIDFCMTY. Residues 263 to 298 are Cytoplasmic-facing; it reads CVQQQLIHEESLSTVDNDQCESDQSEGTCYKRNYPW. Residues 299–319 form a helical membrane-spanning segment; the sequence is IIIAVVPIISVFAIIGVMLFL. The Extracellular portion of the chain corresponds to 320-341; sequence HLEQRVTILEQHFELDTLWLED. Residues 342–362 traverse the membrane as a helical segment; the sequence is ISVILCVVIVSNINLIPLIYF. Over 363–381 the chain is Cytoplasmic; it reads RLHEHVPRFKDRSPILNKA. Residues 382–402 traverse the membrane as a helical segment; sequence VVFLHFIYFSIVCGTILLVHL. At 403–420 the chain is on the extracellular side; sequence QLRNKVSISDSLFSLYNS. Residues 421–441 traverse the membrane as a helical segment; it reads WLTDISMILGFLLSIFIVTTI. Residues 442–474 lie on the Cytoplasmic side of the membrane; it reads AKSSLFNKKWCIGLCIHMKEAEATGGPCEGEEL.

It belongs to the SKINT family. Expressed in skin, thymus and, to a lower extent, bladder and testis.

Its subcellular location is the membrane. Functionally, may act by engaging a cell surface molecule on immature T-cells in the embryonic thymus. The protein is Selection and upkeep of intraepithelial T-cells protein 4 (Skint4) of Mus musculus (Mouse).